The chain runs to 499 residues: Dual specificity protein kinase CLK2 (499 aa).

Residues 1–65 (MPHPRRYHSS…RSSYDDHSSD (65 aa)) form a disordered region. The segment covering 8-23 (HSSERGSRGSYHEHYQ) has biased composition (basic and acidic residues). The segment covering 24 to 33 (SRKHKRRRSR) has biased composition (basic residues). Position 34 is a phosphoserine; by PKB/AKT1 (S34). A compositionally biased stretch (basic and acidic residues) spans 47–65 (REDSYHVRSRSSYDDHSSD). A Phosphoserine; by autocatalysis modification is found at S98. Y99 is modified (phosphotyrosine; by autocatalysis). A disordered region spans residues 102 to 142 (HRENSSYRSQRSSRRKHRRRRRRSRTFSRSSSHSSRRAKSV). The span at 112-127 (RSSRRKHRRRRRRSRT) shows a compositional bias: basic residues. T127 carries the post-translational modification Phosphothreonine; by PKB/AKT1. The residue at position 141 (S141) is a Phosphoserine; by autocatalysis. Y152 bears the Phosphotyrosine mark. Residues 163-479 (EIVSTLGEGT…GEALQHPFFA (317 aa)) enclose the Protein kinase domain. Residues 168 to 176 (LGEGTFGRV) and K192 each bind ATP. D289 serves as the catalytic Proton acceptor. The residue at position 343 (T343) is a Phosphothreonine; by PKB/AKT2.

The protein belongs to the protein kinase superfamily. CMGC Ser/Thr protein kinase family. Lammer subfamily. As to quaternary structure, interacts with RBMX and UBL5. Interacts with AKT1. Autophosphorylates on all three types of residues. Phosphorylation on Ser-34 and Thr-127 by AKT1 is induced by ionizing radiation or insulin. Phosphorylation plays a critical role in cell proliferation following low dose radiation and prevents cell death following high dose radiation. Phosphorylation at Thr-343 by PKB/AKT2 induces its kinase activity which is required for its stability. The phosphorylation status at Ser-141 influences its subnuclear localization; inhibition of phosphorylation at Ser-141 results in accumulation in the nuclear speckle.

It localises to the nucleus. The protein resides in the nucleus speckle. The catalysed reaction is L-seryl-[protein] + ATP = O-phospho-L-seryl-[protein] + ADP + H(+). It carries out the reaction L-threonyl-[protein] + ATP = O-phospho-L-threonyl-[protein] + ADP + H(+). It catalyses the reaction L-tyrosyl-[protein] + ATP = O-phospho-L-tyrosyl-[protein] + ADP + H(+). 5,6-dichloro-1-b-D-ribofuranosylbenzimidazole (DRB) inhibits autophosphorylation. TG003 inhibits its kinase activity and affects the regulation of alternative splicing mediated by phosphorylation of SR proteins. Functionally, dual specificity kinase acting on both serine/threonine and tyrosine-containing substrates. Phosphorylates serine- and arginine-rich (SR) proteins of the spliceosomal complex. May be a constituent of a network of regulatory mechanisms that enable SR proteins to control RNA splicing and can cause redistribution of SR proteins from speckles to a diffuse nucleoplasmic distribution. Acts as a suppressor of hepatic gluconeogenesis and glucose output by repressing PPARGC1A transcriptional activity on gluconeogenic genes via its phosphorylation. Phosphorylates PPP2R5B thereby stimulating the assembly of PP2A phosphatase with the PPP2R5B-AKT1 complex leading to dephosphorylation of AKT1. Phosphorylates: PTPN1, SRSF1 and SRSF3. Regulates the alternative splicing of tissue factor (F3) pre-mRNA in endothelial cells. Phosphorylates PAGE4 at several serine and threonine residues and this phosphorylation attenuates the ability of PAGE4 to potentiate the transcriptional activator activity of JUN. The chain is Dual specificity protein kinase CLK2 (Clk2) from Mus musculus (Mouse).